A 375-amino-acid chain; its full sequence is 23S rRNA (uracil(747)-C(5))-methyltransferase RlmC (375 aa).

[4Fe-4S] cluster contacts are provided by C3, C11, C14, and C87. Residues Q212, F241, E262, and N307 each coordinate S-adenosyl-L-methionine. C334 (nucleophile) is an active-site residue.

The protein belongs to the class I-like SAM-binding methyltransferase superfamily. RNA M5U methyltransferase family. RlmC subfamily.

It catalyses the reaction uridine(747) in 23S rRNA + S-adenosyl-L-methionine = 5-methyluridine(747) in 23S rRNA + S-adenosyl-L-homocysteine + H(+). In terms of biological role, catalyzes the formation of 5-methyl-uridine at position 747 (m5U747) in 23S rRNA. In Escherichia coli O45:K1 (strain S88 / ExPEC), this protein is 23S rRNA (uracil(747)-C(5))-methyltransferase RlmC.